The primary structure comprises 622 residues: Chaperone protein HscA homolog (622 aa).

The protein belongs to the heat shock protein 70 family.

Chaperone involved in the maturation of iron-sulfur cluster-containing proteins. Has a low intrinsic ATPase activity which is markedly stimulated by HscB. This chain is Chaperone protein HscA homolog, found in Burkholderia orbicola (strain MC0-3).